Here is a 212-residue protein sequence, read N- to C-terminus: Ribosomal RNA small subunit methyltransferase G (212 aa).

Residues Gly-73, 127–128 (IE), and Arg-143 each bind S-adenosyl-L-methionine.

This sequence belongs to the methyltransferase superfamily. RNA methyltransferase RsmG family.

It localises to the cytoplasm. The enzyme catalyses guanosine(527) in 16S rRNA + S-adenosyl-L-methionine = N(7)-methylguanosine(527) in 16S rRNA + S-adenosyl-L-homocysteine. In terms of biological role, specifically methylates the N7 position of guanine in position 527 of 16S rRNA. This chain is Ribosomal RNA small subunit methyltransferase G, found in Methylobacterium sp. (strain 4-46).